The sequence spans 666 residues: Amyloid beta A4 precursor protein-binding family B member 1-interacting protein (666 aa).

S55 carries the post-translational modification Phosphoserine. The disordered stretch occupies residues 122-155; that stretch reads SQYEDDLPPPPADPVLDLPLPPPPPEPLSQEEEE. A compositionally biased stretch (pro residues) spans 129–148; the sequence is PPPPADPVLDLPLPPPPPEP. The region spanning 176–263 is the Ras-associating domain; the sequence is KKLVVKVHMN…KILFLEKEEK (88 aa). The PH domain maps to 310–419; the sequence is VPELEGALYL…WVMGIRIAKY (110 aa). The tract at residues 448 to 666 is disordered; the sequence is AAAPAQPSTG…ALQKKRGNVS (219 aa). A compositionally biased stretch (polar residues) spans 453–478; the sequence is QPSTGPKTGTTQPNGQIPQATHSVSA. Basic and acidic residues predominate over residues 483 to 504; sequence AQRHAETSKDKKPALGNHHDPA. S526 carries the post-translational modification Phosphoserine. A Phosphothreonine modification is found at T528. At S531 the chain carries Phosphoserine. Composition is skewed to pro residues over residues 547–589 and 598–631; these read PAPP…PPPS and LPPP…PVPP.

It belongs to the MRL family. In terms of assembly, interacts, through the N-terminal Pro-rich region, with the WW domain of APBB1. Interacts with RAP1A, PFN1, TLN1, VASP, VCL and ENAH. As to expression, widely expressed with high expression in thymus, spleen, lymph node, bone marrow and peripheral leukocytes.

The protein resides in the cell membrane. It localises to the cell projection. The protein localises to the lamellipodium. Its subcellular location is the cell junction. It is found in the focal adhesion. The protein resides in the cytoplasm. It localises to the cytoskeleton. Functionally, appears to function in the signal transduction from Ras activation to actin cytoskeletal remodeling. Suppresses insulin-induced promoter activities through AP1 and SRE. Mediates Rap1-induced adhesion. The protein is Amyloid beta A4 precursor protein-binding family B member 1-interacting protein (APBB1IP) of Homo sapiens (Human).